A 1343-amino-acid polypeptide reads, in one-letter code: DNA-directed RNA polymerase subunit beta (1343 aa).

It belongs to the RNA polymerase beta chain family. As to quaternary structure, the RNAP catalytic core consists of 2 alpha, 1 beta, 1 beta' and 1 omega subunit. When a sigma factor is associated with the core the holoenzyme is formed, which can initiate transcription.

It catalyses the reaction RNA(n) + a ribonucleoside 5'-triphosphate = RNA(n+1) + diphosphate. In terms of biological role, DNA-dependent RNA polymerase catalyzes the transcription of DNA into RNA using the four ribonucleoside triphosphates as substrates. The chain is DNA-directed RNA polymerase subunit beta from Haemophilus influenzae (strain PittEE).